The chain runs to 260 residues: Proteasome subunit alpha (260 aa).

The protein belongs to the peptidase T1A family. The 20S proteasome core is composed of 14 alpha and 14 beta subunits that assemble into four stacked heptameric rings, resulting in a barrel-shaped structure. The two inner rings, each composed of seven catalytic beta subunits, are sandwiched by two outer rings, each composed of seven alpha subunits. The catalytic chamber with the active sites is on the inside of the barrel. Has a gated structure, the ends of the cylinder being occluded by the N-termini of the alpha-subunits. Is capped at one or both ends by the proteasome regulatory ATPase, PAN.

The protein resides in the cytoplasm. The formation of the proteasomal ATPase PAN-20S proteasome complex, via the docking of the C-termini of PAN into the intersubunit pockets in the alpha-rings, triggers opening of the gate for substrate entry. Interconversion between the open-gate and close-gate conformations leads to a dynamic regulation of the 20S proteasome proteolysis activity. Component of the proteasome core, a large protease complex with broad specificity involved in protein degradation. This Pyrococcus abyssi (strain GE5 / Orsay) protein is Proteasome subunit alpha.